Consider the following 280-residue polypeptide: Myelin proteolipid protein B (280 aa).

At 1–10 the chain is on the cytoplasmic side; the sequence is MGWHDGCIRC. 2 S-palmitoyl cysteine lipidation sites follow: Cys7 and Cys10. Residues 11–36 form a helical membrane-spanning segment; the sequence is MVGVPFASVIATVLCFAGVALFCGCG. Residues 37 to 59 lie on the Extracellular side of the membrane; it reads HEALSGTEKLIETYFSKNYQEYE. Residues 60–88 traverse the membrane as a helical segment; that stretch reads YLIHVINAFQYVIYGIAIFFFLYGILLLA. Residues 89-152 lie on the Cytoplasmic side of the membrane; that stretch reads EGFYTTTAIK…LGKWLGHPDK (64 aa). Residues Cys140 and Cys142 are each lipidated (S-palmitoyl cysteine). Residues 153 to 179 traverse the membrane as a helical segment; that stretch reads FVGVTYVITILWILIFACSAVPVYIYF. The Extracellular segment spans residues 180 to 239; sequence NTWVTCQSIAFPGKTTTSVSTLCLDARMYGVLPWNAFPGKVCGTSLLAICKTSEFQMTFH. 2 disulfide bridges follow: Cys185/Cys229 and Cys202/Cys221. Residues 240-269 form a helical membrane-spanning segment; the sequence is LFIAAFVGAAATLVALLTYMVGASFNYAVL. The Cytoplasmic segment spans residues 270 to 280; the sequence is RVTGRSDRSKF.

The protein belongs to the myelin proteolipid protein family.

The protein resides in the cell membrane. In terms of biological role, this is the major myelin protein from the central nervous system. It plays an important role in the formation or maintenance of the multilamellar structure of myelin. The sequence is that of Myelin proteolipid protein B (plp1-b) from Xenopus laevis (African clawed frog).